The chain runs to 196 residues: MSRYRGPRLKKIRRLGALPGLTRKTPKSGSNQKKKFNSGKKEQYRIRLQEKQKLRFHYGLTERQLLRYVHIAGKAKRSTGQVLLQLLEMRLDNILFRLGMASTIPGARQLVNHRHILVNGRIVDIPSFRCKPRDIITTKDNQRSKRLVQNSIASSDPANLPKHLTVDTLQYKGLVKKILDRKWVGLKVNELLVVEY.

The interval 15–42 (LGALPGLTRKTPKSGSNQKKKFNSGKKE) is disordered. The S4 RNA-binding domain maps to 89-150 (MRLDNILFRL…NQRSKRLVQN (62 aa)).

It belongs to the universal ribosomal protein uS4 family. Part of the 30S ribosomal subunit. Contacts protein S5. The interaction surface between S4 and S5 is involved in control of translational fidelity.

The protein resides in the plastid. It is found in the chloroplast. In terms of biological role, one of the primary rRNA binding proteins, it binds directly to 16S rRNA where it nucleates assembly of the body of the 30S subunit. Functionally, with S5 and S12 plays an important role in translational accuracy. This chain is Small ribosomal subunit protein uS4c (rps4), found in Cenchrus longisetus (Feathertop).